Here is a 137-residue protein sequence, read N- to C-terminus: Protein ApaG (137 aa).

Positions 2–126 (PKYQFQVQVQ…FVLEAFSPGQ (125 aa)) constitute an ApaG domain.

This chain is Protein ApaG, found in Acidovorax sp. (strain JS42).